A 514-amino-acid chain; its full sequence is Cobyric acid synthase (514 aa).

A GATase cobBQ-type domain is found at 263–457 (ALDVAVIRLP…LHGIFDNDPL (195 aa)). C344 (nucleophile) is an active-site residue. H449 is a catalytic residue.

It belongs to the CobB/CobQ family. CobQ subfamily.

It participates in cofactor biosynthesis; adenosylcobalamin biosynthesis. In terms of biological role, catalyzes amidations at positions B, D, E, and G on adenosylcobyrinic A,C-diamide. NH(2) groups are provided by glutamine, and one molecule of ATP is hydrogenolyzed for each amidation. The polypeptide is Cobyric acid synthase (Desulfitobacterium hafniense (strain DSM 10664 / DCB-2)).